The sequence spans 271 residues: Glutamate 5-kinase (271 aa).

Residue Lys14 coordinates ATP. Substrate contacts are provided by Ser54, Asp141, and Asn157. ATP-binding positions include 177–178 (SD) and 219–225 (TGGMSSK).

The protein belongs to the glutamate 5-kinase family.

The protein resides in the cytoplasm. It carries out the reaction L-glutamate + ATP = L-glutamyl 5-phosphate + ADP. The protein operates within amino-acid biosynthesis; L-proline biosynthesis; L-glutamate 5-semialdehyde from L-glutamate: step 1/2. Functionally, catalyzes the transfer of a phosphate group to glutamate to form L-glutamate 5-phosphate. This is Glutamate 5-kinase from Enterococcus faecalis (strain ATCC 700802 / V583).